Reading from the N-terminus, the 443-residue chain is Na(+)-translocating ferredoxin:NAD(+) oxidoreductase complex subunit C (443 aa).

4Fe-4S ferredoxin-type domains lie at 359 to 391 (ESAK…IAEY) and 398 to 428 (DKCE…VSSI). Cysteine 369, cysteine 372, cysteine 375, cysteine 379, cysteine 408, cysteine 411, cysteine 414, and cysteine 418 together coordinate [4Fe-4S] cluster.

Belongs to the 4Fe4S bacterial-type ferredoxin family. RnfC subfamily. As to quaternary structure, the complex is composed of six subunits: RnfA, RnfB, RnfC, RnfD, RnfE and RnfG. The cofactor is [4Fe-4S] cluster.

The protein resides in the cell membrane. It carries out the reaction 2 reduced [2Fe-2S]-[ferredoxin] + Na(+)(in) + NAD(+) + H(+) = 2 oxidized [2Fe-2S]-[ferredoxin] + Na(+)(out) + NADH. Functionally, part of a membrane-bound complex that couples electron transfer with translocation of ions across the membrane. Couples electron transfer from reduced ferredoxin to NAD(+) with electrogenic movement of Na(+) out of the cell. Involved in caffeate respiration. This chain is Na(+)-translocating ferredoxin:NAD(+) oxidoreductase complex subunit C, found in Acetobacterium woodii (strain ATCC 29683 / DSM 1030 / JCM 2381 / KCTC 1655 / WB1).